The primary structure comprises 411 residues: LL-diaminopimelate aminotransferase 1 (411 aa).

Residues Tyr-15 and Gly-42 each contribute to the substrate site. Residues Tyr-72, 108–109, Tyr-132, Asn-187, Tyr-218, and 246–248 contribute to the pyridoxal 5'-phosphate site; these read SK and SFS. The substrate site is built by Lys-109, Tyr-132, and Asn-187. An N6-(pyridoxal phosphate)lysine modification is found at Lys-249. Residues Arg-257 and Asn-292 each coordinate pyridoxal 5'-phosphate. The substrate site is built by Asn-292 and Arg-388.

The protein belongs to the class-I pyridoxal-phosphate-dependent aminotransferase family. LL-diaminopimelate aminotransferase subfamily. As to quaternary structure, homodimer. The cofactor is pyridoxal 5'-phosphate.

The enzyme catalyses (2S,6S)-2,6-diaminopimelate + 2-oxoglutarate = (S)-2,3,4,5-tetrahydrodipicolinate + L-glutamate + H2O + H(+). The protein operates within amino-acid biosynthesis; L-lysine biosynthesis via DAP pathway; LL-2,6-diaminopimelate from (S)-tetrahydrodipicolinate (aminotransferase route): step 1/1. Involved in the synthesis of meso-diaminopimelate (m-DAP or DL-DAP), required for both lysine and peptidoglycan biosynthesis. Catalyzes the direct conversion of tetrahydrodipicolinate to LL-diaminopimelate. This Nostoc sp. (strain PCC 7120 / SAG 25.82 / UTEX 2576) protein is LL-diaminopimelate aminotransferase 1.